The chain runs to 267 residues: 4-hydroxy-tetrahydrodipicolinate reductase (267 aa).

10-15 provides a ligand contact to NAD(+); sequence GCLGKQ. An NADP(+)-binding site is contributed by R37. Residues 99–101 and 122–125 contribute to the NAD(+) site; these read GTT and TTNV. H154 serves as the catalytic Proton donor/acceptor. Residue H155 participates in (S)-2,3,4,5-tetrahydrodipicolinate binding. The Proton donor role is filled by K158. Residue 164 to 165 participates in (S)-2,3,4,5-tetrahydrodipicolinate binding; sequence GT.

This sequence belongs to the DapB family.

The protein localises to the cytoplasm. The enzyme catalyses (S)-2,3,4,5-tetrahydrodipicolinate + NAD(+) + H2O = (2S,4S)-4-hydroxy-2,3,4,5-tetrahydrodipicolinate + NADH + H(+). The catalysed reaction is (S)-2,3,4,5-tetrahydrodipicolinate + NADP(+) + H2O = (2S,4S)-4-hydroxy-2,3,4,5-tetrahydrodipicolinate + NADPH + H(+). It participates in amino-acid biosynthesis; L-lysine biosynthesis via DAP pathway; (S)-tetrahydrodipicolinate from L-aspartate: step 4/4. Functionally, catalyzes the conversion of 4-hydroxy-tetrahydrodipicolinate (HTPA) to tetrahydrodipicolinate. This chain is 4-hydroxy-tetrahydrodipicolinate reductase, found in Ehrlichia canis (strain Jake).